The sequence spans 436 residues: Septin-7 (436 aa).

Ser2 carries the post-translational modification N-acetylserine. The residue at position 29 (Tyr29) is a Phosphotyrosine. The Septin-type G domain maps to 46-315 (RGFEFTLMVV…ENYRSRKLAA (270 aa)). The tract at residues 46 to 316 (RGFEFTLMVV…NYRSRKLAAV (271 aa)) is interaction with SEPTIN12. The tract at residues 56-63 (GESGLGKS) is G1 motif. Position 56–63 (56–63 (GESGLGKS)) interacts with GTP. Phosphoserine is present on Ser76. Residues Thr89, Gly115, and 194-202 (KADTLTPEE) contribute to the GTP site. The G3 motif stretch occupies residues 112-115 (DTPG). Residues 193-196 (AKAD) are G4 motif. The residue at position 227 (Thr227) is a Phosphothreonine. Residues Gly249 and Arg264 each contribute to the GTP site. Residues 331–436 (TKSPLAQMEE…EKNKKKGKIF (106 aa)) are a coiled coil. The residue at position 333 (Ser333) is a Phosphoserine. Residue Lys372 is modified to N6-acetyllysine. The span at 377–409 (ELQRRHEQMKKNLEAQHKELEEKRRQFEEEKAN) shows a compositional bias: basic and acidic residues. The segment at 377–436 (ELQRRHEQMKKNLEAQHKELEEKRRQFEEEKANWEAQQRILEQQNSSRTLEKNKKKGKIF) is disordered. The residue at position 423 (Ser423) is a Phosphoserine. Thr425 is subject to Phosphothreonine.

It belongs to the TRAFAC class TrmE-Era-EngA-EngB-Septin-like GTPase superfamily. Septin GTPase family. Septins polymerize into heterooligomeric protein complexes that form filaments, and associate with cellular membranes, actin filaments and microtubules. GTPase activity is required for filament formation. Filaments are assembled from asymmetrical heterotrimers, composed of SEPTIN2, SEPTIN6 and SEPTIN7 that associate head-to-head to form a hexameric unit. Within the trimer, directly interacts with SEPTIN6, while interaction with SEPTIN2 seems indirect. In the absence of SEPTIN6, forms homodimers. Interacts directly with CENPE and links CENPE to septin filaments composed of SEPTIN2, SEPTIN6 and SEPTIN7. Interacts with SEPTIN5. Component of a septin core octameric complex consisting of SEPTIN12, SEPTIN7, SEPTIN6 and SEPTIN2 or SEPTIN4 in the order 12-7-6-2-2-6-7-12 or 12-7-6-4-4-6-7-12 and located in the sperm annulus; the SEPTIN12:SEPTIN7 association is mediated by the respective GTP-binding domains. Interacts with SEPTIN2, SEPTIN7, SEPTIN8, SEPTIN9 and SEPTIN11.

It localises to the cytoplasm. It is found in the chromosome. The protein localises to the centromere. The protein resides in the kinetochore. Its subcellular location is the cytoskeleton. It localises to the spindle. It is found in the cleavage furrow. The protein localises to the midbody. The protein resides in the cilium axoneme. Its subcellular location is the cell projection. It localises to the cilium. It is found in the flagellum. Functionally, filament-forming cytoskeletal GTPase. Required for normal organization of the actin cytoskeleton. Required for normal progress through mitosis. Involved in cytokinesis. Required for normal association of CENPE with the kinetochore. Plays a role in ciliogenesis and collective cell movements. Forms a filamentous structure with SEPTIN12, SEPTIN6, SEPTIN2 and probably SEPTIN4 at the sperm annulus which is required for the structural integrity and motility of the sperm tail during postmeiotic differentiation. This is Septin-7 from Rattus norvegicus (Rat).